A 614-amino-acid chain; its full sequence is Replication protein A 70 kDa DNA-binding subunit (614 aa).

A disordered region spans residues 112–178; the sequence is GNPVPYNEGQ…SSVKTPGGTQ (67 aa). Polar residues-rich tracts occupy residues 120–130 and 158–178; these read GQGQQRSSAPT and PSNQ…GGTQ. The segment at residues 194–278 is a DNA-binding region (OB); sequence WTICARVTQK…VKNDYEITFN (85 aa). The segment at 478-500 adopts a C4-type zinc-finger fold; sequence CPSQDCNKKVIDQQNGLYRCEKC.

The protein belongs to the replication factor A protein 1 family. Component of the heterotrimeric canonical replication protein A complex (RPA).

The protein resides in the nucleus. The protein localises to the PML body. In terms of biological role, as part of the heterotrimeric replication protein A complex (RPA/RP-A), binds and stabilizes single-stranded DNA intermediates, that form during DNA replication or upon DNA stress. It prevents their reannealing and in parallel, recruits and activates different proteins and complexes involved in DNA metabolism. Thereby, it plays an essential role both in DNA replication and the cellular response to DNA damage. The polypeptide is Replication protein A 70 kDa DNA-binding subunit (RPA1) (Gallus gallus (Chicken)).